We begin with the raw amino-acid sequence, 219 residues long: UPF0502 protein Gura_3445 (219 aa).

The segment at 162–181 (AGEPDLPDDTPAPPPEPARQ) is disordered.

This sequence belongs to the UPF0502 family.

This chain is UPF0502 protein Gura_3445, found in Geotalea uraniireducens (strain Rf4) (Geobacter uraniireducens).